A 367-amino-acid chain; its full sequence is 2-aminoethylphosphonate--pyruvate transaminase (367 aa).

An N6-(pyridoxal phosphate)lysine modification is found at Lys-194.

The protein belongs to the class-V pyridoxal-phosphate-dependent aminotransferase family. PhnW subfamily. As to quaternary structure, homodimer. Requires pyridoxal 5'-phosphate as cofactor.

It catalyses the reaction (2-aminoethyl)phosphonate + pyruvate = phosphonoacetaldehyde + L-alanine. Functionally, involved in phosphonate degradation. This Salmonella paratyphi A (strain ATCC 9150 / SARB42) protein is 2-aminoethylphosphonate--pyruvate transaminase.